A 256-amino-acid chain; its full sequence is MLRIADKTFDSHLFTGTGKFASSQLMVEAIRASGSQLVTLAMKRVDLRQHNDAILEPLIAAGVTLLPNTSGAKTAEEAIFAAHLAREALGTNWLKLEIHPDARWLLPDPIETLKAAETLVQQGFVVLPYCGADPVLCKRLEEVGCAAVMPLGAPIGSNQGLETRAMLEIIIQQATVPVVVDAGIGVPSHAAQALEMGADAVLVNTAIAVADDPVNMAKAFRLAVEAGLLARQSGPGSRSHFAHATSPLAGFLEASA.

Lysine 95 acts as the Schiff-base intermediate with DXP in catalysis. Residues glycine 156, 182-183 (AG), and 204-205 (NT) contribute to the 1-deoxy-D-xylulose 5-phosphate site.

This sequence belongs to the ThiG family. In terms of assembly, homotetramer. Forms heterodimers with either ThiH or ThiS.

The protein localises to the cytoplasm. It catalyses the reaction [ThiS sulfur-carrier protein]-C-terminal-Gly-aminoethanethioate + 2-iminoacetate + 1-deoxy-D-xylulose 5-phosphate = [ThiS sulfur-carrier protein]-C-terminal Gly-Gly + 2-[(2R,5Z)-2-carboxy-4-methylthiazol-5(2H)-ylidene]ethyl phosphate + 2 H2O + H(+). Its pathway is cofactor biosynthesis; thiamine diphosphate biosynthesis. In terms of biological role, catalyzes the rearrangement of 1-deoxy-D-xylulose 5-phosphate (DXP) to produce the thiazole phosphate moiety of thiamine. Sulfur is provided by the thiocarboxylate moiety of the carrier protein ThiS. In vitro, sulfur can be provided by H(2)S. The chain is Thiazole synthase from Escherichia coli O8 (strain IAI1).